The sequence spans 615 residues: Chaperone protein HtpG (615 aa).

The a; substrate-binding stretch occupies residues 1-335 (MSAEKQTHGF…APDLPLNVSR (335 aa)). The tract at residues 336–541 (ELLQDYGPVQ…EDQLGPQMRR (206 aa)) is b. The c stretch occupies residues 542–615 (MLEAAGQPVP…RMQALLSQSV (74 aa)).

It belongs to the heat shock protein 90 family. In terms of assembly, homodimer.

The protein localises to the cytoplasm. Functionally, molecular chaperone. Has ATPase activity. The sequence is that of Chaperone protein HtpG from Alcanivorax borkumensis (strain ATCC 700651 / DSM 11573 / NCIMB 13689 / SK2).